The chain runs to 360 residues: A-type ATP synthase subunit C (360 aa).

Positions 1 to 25 (MRLLEKLWGQKPSRKSDKKKNGTSN) are disordered.

Belongs to the V-ATPase V0D/AC39 subunit family. As to quaternary structure, has multiple subunits with at least A(3), B(3), C, D, E, F, H, I and proteolipid K(x).

Its subcellular location is the cell membrane. Functionally, component of the A-type ATP synthase that produces ATP from ADP in the presence of a proton gradient across the membrane. The polypeptide is A-type ATP synthase subunit C (Methanosarcina barkeri (strain Fusaro / DSM 804)).